The chain runs to 206 residues: Holliday junction branch migration complex subunit RuvA (206 aa).

Residues 1-64 (MIGRLRGNLL…EDAQLLYGFN (64 aa)) form a domain I region. Positions 65–143 (TKKERALFRE…GWGAGDLFTP (79 aa)) are domain II. The segment at 144–157 (ADTTSMDDASDLIS) is flexible linker. A domain III region spans residues 158–206 (SPQSAQDEAVSALISLGYKPVQASKMVSQVAKPDMTSESLIRESLKSMI).

This sequence belongs to the RuvA family. In terms of assembly, homotetramer. Forms an RuvA(8)-RuvB(12)-Holliday junction (HJ) complex. HJ DNA is sandwiched between 2 RuvA tetramers; dsDNA enters through RuvA and exits via RuvB. An RuvB hexamer assembles on each DNA strand where it exits the tetramer. Each RuvB hexamer is contacted by two RuvA subunits (via domain III) on 2 adjacent RuvB subunits; this complex drives branch migration. In the full resolvosome a probable DNA-RuvA(4)-RuvB(12)-RuvC(2) complex forms which resolves the HJ.

The protein localises to the cytoplasm. The RuvA-RuvB-RuvC complex processes Holliday junction (HJ) DNA during genetic recombination and DNA repair, while the RuvA-RuvB complex plays an important role in the rescue of blocked DNA replication forks via replication fork reversal (RFR). RuvA specifically binds to HJ cruciform DNA, conferring on it an open structure. The RuvB hexamer acts as an ATP-dependent pump, pulling dsDNA into and through the RuvAB complex. HJ branch migration allows RuvC to scan DNA until it finds its consensus sequence, where it cleaves and resolves the cruciform DNA. The chain is Holliday junction branch migration complex subunit RuvA from Aliivibrio salmonicida (strain LFI1238) (Vibrio salmonicida (strain LFI1238)).